Consider the following 334-residue polypeptide: Adenosine deaminase (334 aa).

Residues H16 and H18 each coordinate Zn(2+). Residues H18, D20, and G173 each coordinate substrate. H200 contributes to the Zn(2+) binding site. The active-site Proton donor is the E203. D281 is a Zn(2+) binding site.

It belongs to the metallo-dependent hydrolases superfamily. Adenosine and AMP deaminases family. Adenosine deaminase subfamily. Zn(2+) serves as cofactor.

It carries out the reaction adenosine + H2O + H(+) = inosine + NH4(+). It catalyses the reaction 2'-deoxyadenosine + H2O + H(+) = 2'-deoxyinosine + NH4(+). In terms of biological role, catalyzes the hydrolytic deamination of adenosine and 2-deoxyadenosine. The protein is Adenosine deaminase of Clostridium acetobutylicum (strain ATCC 824 / DSM 792 / JCM 1419 / IAM 19013 / LMG 5710 / NBRC 13948 / NRRL B-527 / VKM B-1787 / 2291 / W).